Here is a 625-residue protein sequence, read N- to C-terminus: Glutamyl-tRNA(Gln) amidotransferase subunit E (625 aa).

Belongs to the GatB/GatE family. GatE subfamily. As to quaternary structure, heterodimer of GatD and GatE.

It carries out the reaction L-glutamyl-tRNA(Gln) + L-glutamine + ATP + H2O = L-glutaminyl-tRNA(Gln) + L-glutamate + ADP + phosphate + H(+). Allows the formation of correctly charged Gln-tRNA(Gln) through the transamidation of misacylated Glu-tRNA(Gln) in organisms which lack glutaminyl-tRNA synthetase. The reaction takes place in the presence of glutamine and ATP through an activated gamma-phospho-Glu-tRNA(Gln). The GatDE system is specific for glutamate and does not act on aspartate. The chain is Glutamyl-tRNA(Gln) amidotransferase subunit E from Caldivirga maquilingensis (strain ATCC 700844 / DSM 13496 / JCM 10307 / IC-167).